We begin with the raw amino-acid sequence, 66 residues long: MSFMKKSLLLVLFLGVVSLSNCEEEKGENENEDHEEHHEEKRLLGDLLGQTSKLVNDLTDTVGSIV.

The first 22 residues, 1–22 (MSFMKKSLLLVLFLGVVSLSNC), serve as a signal peptide directing secretion. Residues 23 to 40 (EEEKGENENEDHEEHHEE) constitute a propeptide that is removed on maturation.

In terms of tissue distribution, expressed by the skin glands.

The protein resides in the secreted. In terms of biological role, possesses a potent antimicrobial activity against Gram-positive and Gram-negative bacteria. Probably acts by disturbing membrane functions with its amphipathic structure. In Agalychnis dacnicolor (Giant Mexican leaf frog), this protein is Dermaseptin PD-3-7.